The following is a 335-amino-acid chain: Deoxyhypusine hydroxylase (335 aa).

5 HEAT-like PBS-type repeats span residues 71 to 97 (LKHELAYCLGQTRNPESVPYLQEVVKD), 104 to 130 (CRHEAAEALGALGYEDSLEILKVLRDN), 200 to 233 (QRYRAMFALRDLASPPDLPTATHAVEALAKGLKD), 238 to 264 (FRHEIAFVFGQLSHPASIPSLTEALSD), and 271 to 298 (VRHEAAEALGSLGDCEGVEDTLKKFLND). The Fe cation site is built by histidine 73, glutamate 74, histidine 106, and glutamate 107. Positions 240, 241, 273, and 274 each coordinate Fe cation.

Belongs to the deoxyhypusine hydroxylase family. It depends on Fe(2+) as a cofactor.

It is found in the cytoplasm. The protein resides in the nucleus. It catalyses the reaction [eIF5A protein]-deoxyhypusine + AH2 + O2 = [eIF5A protein]-hypusine + A + H2O. It functions in the pathway protein modification; eIF5A hypusination. Its function is as follows. Catalyzes the hydroxylation of the N(6)-(4-aminobutyl)-L-lysine intermediate to form hypusine, an essential post-translational modification only found in mature eIF-5A factor. This is Deoxyhypusine hydroxylase (lia1) from Aspergillus clavatus (strain ATCC 1007 / CBS 513.65 / DSM 816 / NCTC 3887 / NRRL 1 / QM 1276 / 107).